We begin with the raw amino-acid sequence, 340 residues long: Phosphate acyltransferase (340 aa).

This sequence belongs to the PlsX family. In terms of assembly, homodimer. Probably interacts with PlsY.

The protein resides in the cytoplasm. The catalysed reaction is a fatty acyl-[ACP] + phosphate = an acyl phosphate + holo-[ACP]. The protein operates within lipid metabolism; phospholipid metabolism. Functionally, catalyzes the reversible formation of acyl-phosphate (acyl-PO(4)) from acyl-[acyl-carrier-protein] (acyl-ACP). This enzyme utilizes acyl-ACP as fatty acyl donor, but not acyl-CoA. The protein is Phosphate acyltransferase of Trichodesmium erythraeum (strain IMS101).